Here is a 95-residue protein sequence, read N- to C-terminus: Integration host factor subunit beta (95 aa).

It belongs to the bacterial histone-like protein family. As to quaternary structure, heterodimer of an alpha and a beta chain.

This protein is one of the two subunits of integration host factor, a specific DNA-binding protein that functions in genetic recombination as well as in transcriptional and translational control. The polypeptide is Integration host factor subunit beta (Klebsiella pneumoniae subsp. pneumoniae (strain ATCC 700721 / MGH 78578)).